A 567-amino-acid polypeptide reads, in one-letter code: Hydrogenase-2 large chain (567 aa).

4 residues coordinate Ni(2+): C61, C64, C546, and C549. A propeptide spanning residues 553-567 (VVDADGNEVVSVKVL) is cleaved from the precursor.

This sequence belongs to the [NiFe]/[NiFeSe] hydrogenase large subunit family. As to quaternary structure, heterodimer of a large and a small subunit. Ni(2+) serves as cofactor.

It is found in the cell membrane. It carries out the reaction H2 + A = AH2. Its function is as follows. This is one of three E.coli hydrogenases synthesized in response to different physiological conditions. HYD2 is involved in hydrogen uptake. This Escherichia coli O157:H7 protein is Hydrogenase-2 large chain (hybC).